A 547-amino-acid polypeptide reads, in one-letter code: Sesquiterpene synthase TPS3 (547 aa).

Positions 265, 302, 306, 443, and 446 each coordinate (2E,6E)-farnesyl diphosphate. Mg(2+)-binding residues include aspartate 302 and aspartate 306. The DDXXD motif signature appears at 302–306 (DDIYD). Aspartate 446, threonine 450, and glutamate 454 together coordinate Mg(2+).

The protein belongs to the terpene synthase family. Tpsb subfamily. Monomer. It depends on Mg(2+) as a cofactor.

Its subcellular location is the cytoplasm. The catalysed reaction is (2E,6E)-farnesyl diphosphate = (1S,5S,6R)-alpha-bergamotene + diphosphate. The protein operates within secondary metabolite biosynthesis; terpenoid biosynthesis. In terms of biological role, sesquiterpene synthase involved in the biosynthesis of volatile organic compounds. Mediates the conversion of (2E,6E)-farnesyl diphosphate (FPP) into alpha-bergamotene. Does not use (2E)-geranyl diphosphate (GPP) as substrate. This is Sesquiterpene synthase TPS3 from Cananga odorata (Ylang-ylang tree).